Consider the following 285-residue polypeptide: Phosphatidylserine decarboxylase proenzyme (285 aa).

Catalysis depends on charge relay system; for autoendoproteolytic cleavage activity residues Asp89, His146, and Ser252. Ser252 serves as the catalytic Schiff-base intermediate with substrate; via pyruvic acid; for decarboxylase activity. Residue Ser252 is modified to Pyruvic acid (Ser); by autocatalysis.

The protein belongs to the phosphatidylserine decarboxylase family. PSD-B subfamily. Prokaryotic type I sub-subfamily. In terms of assembly, heterodimer of a large membrane-associated beta subunit and a small pyruvoyl-containing alpha subunit. Pyruvate serves as cofactor. In terms of processing, is synthesized initially as an inactive proenzyme. Formation of the active enzyme involves a self-maturation process in which the active site pyruvoyl group is generated from an internal serine residue via an autocatalytic post-translational modification. Two non-identical subunits are generated from the proenzyme in this reaction, and the pyruvate is formed at the N-terminus of the alpha chain, which is derived from the carboxyl end of the proenzyme. The autoendoproteolytic cleavage occurs by a canonical serine protease mechanism, in which the side chain hydroxyl group of the serine supplies its oxygen atom to form the C-terminus of the beta chain, while the remainder of the serine residue undergoes an oxidative deamination to produce ammonia and the pyruvoyl prosthetic group on the alpha chain. During this reaction, the Ser that is part of the protease active site of the proenzyme becomes the pyruvoyl prosthetic group, which constitutes an essential element of the active site of the mature decarboxylase.

Its subcellular location is the cell membrane. It catalyses the reaction a 1,2-diacyl-sn-glycero-3-phospho-L-serine + H(+) = a 1,2-diacyl-sn-glycero-3-phosphoethanolamine + CO2. It participates in phospholipid metabolism; phosphatidylethanolamine biosynthesis; phosphatidylethanolamine from CDP-diacylglycerol: step 2/2. In terms of biological role, catalyzes the formation of phosphatidylethanolamine (PtdEtn) from phosphatidylserine (PtdSer). This is Phosphatidylserine decarboxylase proenzyme from Vibrio vulnificus (strain CMCP6).